A 179-amino-acid chain; its full sequence is Large ribosomal subunit protein uL5 (179 aa).

This sequence belongs to the universal ribosomal protein uL5 family. In terms of assembly, part of the 50S ribosomal subunit; part of the 5S rRNA/L5/L18/L25 subcomplex. Contacts the 5S rRNA and the P site tRNA. Forms a bridge to the 30S subunit in the 70S ribosome.

This is one of the proteins that bind and probably mediate the attachment of the 5S RNA into the large ribosomal subunit, where it forms part of the central protuberance. In the 70S ribosome it contacts protein S13 of the 30S subunit (bridge B1b), connecting the 2 subunits; this bridge is implicated in subunit movement. Contacts the P site tRNA; the 5S rRNA and some of its associated proteins might help stabilize positioning of ribosome-bound tRNAs. The sequence is that of Large ribosomal subunit protein uL5 from Nitrosomonas eutropha (strain DSM 101675 / C91 / Nm57).